A 1916-amino-acid chain; its full sequence is Diacylglycerol kinase eta (1916 aa).

Residues 1–36 are disordered; it reads MAHIKLDTLDVVQRPGTTRRSNSNSGRSSACSSGSL. Positions 19–36 are enriched in low complexity; sequence RRSNSNSGRSSACSSGSL. A PH domain is found at 82-175; that stretch reads AIIKEGFLLK…WLGSLKTATT (94 aa). 2 Phorbol-ester/DAG-type zinc fingers span residues 195–245 and 268–319; these read HHHW…IANC and PHQW…AVAC. One can recognise a DAGKc domain in the interval 350-486; that stretch reads GNFSPLLVFV…DRWSIMVFEK (137 aa). Over residues 623–644 the composition is skewed to basic and acidic residues; the sequence is DEINTKERRSSRSLRSSEKEAL. 4 disordered regions span residues 623-648, 846-874, 1018-1067, and 1183-1214; these read DEIN…QSRA, DRGK…KEDN, TLCS…DDNP, and TSTS…SVKP. The region spanning 1853-1916 is the SAM domain; that stretch reads WSVNEVVTWL…LQAIKDLSEN (64 aa).

The protein belongs to the eukaryotic diacylglycerol kinase family.

The protein resides in the cytoplasm. It carries out the reaction a 1,2-diacyl-sn-glycerol + ATP = a 1,2-diacyl-sn-glycero-3-phosphate + ADP + H(+). Phosphorylates diacylglycerol (DAG) to generate phosphatidic acid (PA). In Drosophila ananassae (Fruit fly), this protein is Diacylglycerol kinase eta.